The primary structure comprises 266 residues: Glucosamine-6-phosphate deaminase (266 aa).

Asp72 functions as the Proton acceptor; for enolization step in the catalytic mechanism. The active-site For ring-opening step is Asp141. Residue His143 is the Proton acceptor; for ring-opening step of the active site. The For ring-opening step role is filled by Glu148.

The protein belongs to the glucosamine/galactosamine-6-phosphate isomerase family. NagB subfamily. As to quaternary structure, homohexamer.

It carries out the reaction alpha-D-glucosamine 6-phosphate + H2O = beta-D-fructose 6-phosphate + NH4(+). It functions in the pathway amino-sugar metabolism; N-acetylneuraminate degradation; D-fructose 6-phosphate from N-acetylneuraminate: step 5/5. With respect to regulation, allosterically activated by N-acetylglucosamine 6-phosphate (GlcNAc6P). Catalyzes the reversible isomerization-deamination of glucosamine 6-phosphate (GlcN6P) to form fructose 6-phosphate (Fru6P) and ammonium ion. This Serratia proteamaculans (strain 568) protein is Glucosamine-6-phosphate deaminase.